A 356-amino-acid polypeptide reads, in one-letter code: tRNA-specific 2-thiouridylase MnmA 1 (356 aa).

Residues 8 to 15 (GMSGGVDS) and Met34 contribute to the ATP site. The active-site Nucleophile is Cys103. A disulfide bond links Cys103 and Cys199. Gly127 provides a ligand contact to ATP. Residues 149 to 151 (KDQ) are interaction with tRNA. The active-site Cysteine persulfide intermediate is the Cys199. Positions 305-306 (RY) are interaction with tRNA.

Belongs to the MnmA/TRMU family.

It is found in the cytoplasm. It catalyses the reaction S-sulfanyl-L-cysteinyl-[protein] + uridine(34) in tRNA + AH2 + ATP = 2-thiouridine(34) in tRNA + L-cysteinyl-[protein] + A + AMP + diphosphate + H(+). Functionally, catalyzes the 2-thiolation of uridine at the wobble position (U34) of tRNA, leading to the formation of s(2)U34. This is tRNA-specific 2-thiouridylase MnmA 1 from Clostridium botulinum (strain ATCC 19397 / Type A).